The primary structure comprises 293 residues: 4-hydroxy-tetrahydrodipicolinate synthase (293 aa).

Thr47 serves as a coordination point for pyruvate. The active-site Proton donor/acceptor is Tyr136. Lys164 functions as the Schiff-base intermediate with substrate in the catalytic mechanism. Ile206 contacts pyruvate.

It belongs to the DapA family. Homotetramer; dimer of dimers.

The protein resides in the cytoplasm. The catalysed reaction is L-aspartate 4-semialdehyde + pyruvate = (2S,4S)-4-hydroxy-2,3,4,5-tetrahydrodipicolinate + H2O + H(+). It participates in amino-acid biosynthesis; L-lysine biosynthesis via DAP pathway; (S)-tetrahydrodipicolinate from L-aspartate: step 3/4. Its function is as follows. Catalyzes the condensation of (S)-aspartate-beta-semialdehyde [(S)-ASA] and pyruvate to 4-hydroxy-tetrahydrodipicolinate (HTPA). This chain is 4-hydroxy-tetrahydrodipicolinate synthase, found in Listeria innocua serovar 6a (strain ATCC BAA-680 / CLIP 11262).